A 142-amino-acid chain; its full sequence is Large ribosomal subunit protein uL13 (142 aa).

Belongs to the universal ribosomal protein uL13 family. As to quaternary structure, part of the 50S ribosomal subunit.

In terms of biological role, this protein is one of the early assembly proteins of the 50S ribosomal subunit, although it is not seen to bind rRNA by itself. It is important during the early stages of 50S assembly. The sequence is that of Large ribosomal subunit protein uL13 from Polynucleobacter asymbioticus (strain DSM 18221 / CIP 109841 / QLW-P1DMWA-1) (Polynucleobacter necessarius subsp. asymbioticus).